A 125-amino-acid chain; its full sequence is uncharacterized protein (125 aa).

The transit peptide at 1-46 (MFFDTKVLNYPTIHKSISMASTMQRTSSSAASNERQLSQLQRRAPS) directs the protein to the chloroplast.

It is found in the plastid. It localises to the chloroplast. This is an uncharacterized protein from Arabidopsis thaliana (Mouse-ear cress).